Consider the following 84-residue polypeptide: Cell division topological specificity factor (84 aa).

Belongs to the MinE family.

In terms of biological role, prevents the cell division inhibition by proteins MinC and MinD at internal division sites while permitting inhibition at polar sites. This ensures cell division at the proper site by restricting the formation of a division septum at the midpoint of the long axis of the cell. This is Cell division topological specificity factor from Pseudomonas entomophila (strain L48).